Reading from the N-terminus, the 488-residue chain is MPQLRDSGNHSTAPLDAHTKDEIQSFARIFGIETEYGVSVTGSDRPCDAGQTAMMMFQPIVAEARSTNTYIENGSRLYLDVGSHPEYATAEARDPMDALALDAAGELVMRDLALDAQRRLRSIQGAGSTVHVFKNNVDSAGHSFGCHENYLVRRFVPLKTIEQELLPFLITRQLFTGAGRMGEQGFQITQRADFLDEAVSSATTRSRPMVNTRDEPHADPDAFRRLHVIIGDSNRSQWATMMKLATTHLVLCVIEQAGREGKDSGFARFSFADASAANHKVSRDLTGVEASFDMADGTVMEGGAVAIQERYLEIVERFVGQHPEVCSSLPRTDVHEVIRRWRRVIEAFRSGVSETFADKVDWLAKRRLFDMLRNRAGGRLSVSKLEQLDMDYHDVANGALYASLCRRGAMRTLVNESQAHEAIDVPPHDTRAALRGRFIQSARSHNAQYSCDWTRLSLTSPNRMDVTLLDPFDAQPSDRFLTILEALQ.

Residue glutamate 33 participates in Mg(2+) binding. Arginine 76 contacts ATP. Tyrosine 78 serves as a coordination point for Mg(2+). Residue aspartate 80 is the Proton acceptor of the active site. Glutamate 86 is a binding site for Mg(2+). Positions 89 and 453 each coordinate ATP.

The protein belongs to the Pup ligase/Pup deamidase family. Pup-conjugating enzyme subfamily.

It catalyses the reaction ATP + [prokaryotic ubiquitin-like protein]-L-glutamate + [protein]-L-lysine = ADP + phosphate + N(6)-([prokaryotic ubiquitin-like protein]-gamma-L-glutamyl)-[protein]-L-lysine.. It functions in the pathway protein degradation; proteasomal Pup-dependent pathway. It participates in protein modification; protein pupylation. Functionally, catalyzes the covalent attachment of the prokaryotic ubiquitin-like protein modifier Pup to the proteasomal substrate proteins, thereby targeting them for proteasomal degradation. This tagging system is termed pupylation. The ligation reaction involves the side-chain carboxylate of the C-terminal glutamate of Pup and the side-chain amino group of a substrate lysine. The protein is Pup--protein ligase of Bifidobacterium adolescentis (strain ATCC 15703 / DSM 20083 / NCTC 11814 / E194a).